Consider the following 147-residue polypeptide: AP-2 complex subunit sigma (147 aa).

This sequence belongs to the adaptor complexes small subunit family. Adaptor protein complex 2 (AP-2) is a heterotetramer composed of two large adaptins (alpha-type subunit APL3 and beta-type subunit APL1), a medium chain (mu-type subunit APM4) and a small adaptin (sigma-type subunit APS2). Interacts with APL1.

The protein localises to the cell membrane. The protein resides in the membrane. It is found in the coated pit. Component of the adaptor complexes which link clathrin to receptors in coated vesicles. Clathrin-associated protein complexes are believed to interact with the cytoplasmic tails of membrane proteins, leading to their selection and concentration. This is AP-2 complex subunit sigma (APS2) from Saccharomyces cerevisiae (strain ATCC 204508 / S288c) (Baker's yeast).